The sequence spans 237 residues: B3 domain-containing protein Os06g0194400 (237 aa).

Disordered stretches follow at residues 1-23 and 38-82; these read MIEA…RQVE and SAAV…LPEK. The TF-B3 DNA-binding region spans 139–230; that stretch reads FVKPMLQSHV…KFKVYIIRAS (92 aa).

The protein localises to the nucleus. The chain is B3 domain-containing protein Os06g0194400 from Oryza sativa subsp. japonica (Rice).